Consider the following 91-residue polypeptide: Small ribosomal subunit protein uS15c (91 aa).

It belongs to the universal ribosomal protein uS15 family. Part of the 30S ribosomal subunit.

The protein resides in the plastid. Its subcellular location is the chloroplast. The polypeptide is Small ribosomal subunit protein uS15c (rps15) (Eucalyptus globulus subsp. globulus (Tasmanian blue gum)).